The primary structure comprises 83 residues: Large ribosomal subunit protein bL27 (83 aa).

Positions M1–L21 are disordered.

It belongs to the bacterial ribosomal protein bL27 family.

The chain is Large ribosomal subunit protein bL27 from Kosmotoga olearia (strain ATCC BAA-1733 / DSM 21960 / TBF 19.5.1).